Reading from the N-terminus, the 101-residue chain is Interleukin-8 (101 aa).

Positions 1-22 (MTSKLAVALLAAFLLSAALCEG) are cleaved as a signal peptide. Citrulline is present on arginine 27. 2 disulfides stabilise this stretch: cysteine 34–cysteine 61 and cysteine 36–cysteine 77.

The protein belongs to the intercrine alpha (chemokine CxC) family. In terms of assembly, homodimer. Interacts with TNFAIP6 (via Link domain); this interaction interferes with chemokine binding to glycosaminoglycans. Post-translationally, citrullination at Arg-27 prevents proteolysis, and dampens tissue inflammation, it also enhances leukocytosis, possibly through impaired chemokine clearance from the blood circulation.

The protein localises to the secreted. Its function is as follows. Chemotactic factor that mediates inflammatory response by attracting neutrophils, basophils, and T-cells to clear pathogens and protect the host from infection. Also plays an important role in neutrophil activation. Released in response to an inflammatory stimulus, exerts its effect by binding to the G-protein-coupled receptors CXCR1 and CXCR2, primarily found in neutrophils, monocytes and endothelial cells. G-protein heterotrimer (alpha, beta, gamma subunits) constitutively binds to CXCR1/CXCR2 receptor and activation by IL8 leads to beta and gamma subunits release from Galpha (GNAI2 in neutrophils) and activation of several downstream signaling pathways including PI3K and MAPK pathways. The chain is Interleukin-8 (CXCL8) from Cercocebus atys (Sooty mangabey).